A 292-amino-acid chain; its full sequence is AKT-interacting protein homolog B (292 aa).

The disordered stretch occupies residues 1–44; it reads MNPFWNMPSASVRKRSDNDEKIATADQKISPARSSSAKKQLPSI. Residues 14 to 23 show a composition bias toward basic and acidic residues; the sequence is KRSDNDEKIA. In terms of domain architecture, UBC core spans 75 to 223; it reads YLEYSLLAEF…VVDSVKLCNS (149 aa).

Belongs to the ubiquitin-conjugating enzyme family. FTS subfamily.

The protein localises to the cytoplasm. Its subcellular location is the cell membrane. Its function is as follows. May function to promote vesicle trafficking and/or fusion. May also regulate apoptosis. In Xenopus laevis (African clawed frog), this protein is AKT-interacting protein homolog B (aktip-b).